We begin with the raw amino-acid sequence, 1118 residues long: Phytochrome 1 (1118 aa).

A compositionally biased stretch (low complexity) spans methionine 1–serine 10. Positions methionine 1–alanine 23 are disordered. Residues aspartate 212–valine 391 form the GAF domain. Residue cysteine 317 coordinates phytochromobilin. PAS domains lie at valine 606–glutamate 677 and aspartate 740–methionine 811. A Histidine kinase domain is found at tyrosine 887–histidine 1110.

This sequence belongs to the phytochrome family. In terms of assembly, homodimer. Contains one covalently linked phytochromobilin chromophore.

Regulatory photoreceptor which exists in two forms that are reversibly interconvertible by light: the Pr form that absorbs maximally in the red region of the spectrum and the Pfr form that absorbs maximally in the far-red region. Photoconversion of Pr to Pfr induces an array of morphogenic responses, whereas reconversion of Pfr to Pr cancels the induction of those responses. Pfr controls the expression of a number of nuclear genes including those encoding the small subunit of ribulose-bisphosphate carboxylase, chlorophyll A/B binding protein, protochlorophyllide reductase, rRNA, etc. It also controls the expression of its own gene(s) in a negative feedback fashion. In Adiantum capillus-veneris (Maidenhair fern), this protein is Phytochrome 1 (PHY1).